The chain runs to 437 residues: F-box only protein 9 (437 aa).

A disordered region spans residues Met1 to Asp29. Acidic residues predominate over residues Gly16–Ala26. A TPR repeat occupies Ala84 to Ile117. Ser126 carries the phosphoserine modification. Residues Gln175–Ala226 form the F-box domain.

As to quaternary structure, part of the SCF (SKP1-CUL1-F-box) E3 ubiquitin-protein ligase complex SCF(FBXO9) composed of CUL1, SKP1, RBX1 and FBXO9. Interacts with TTI1 and TELO2; when TTI1 and TELO2 are phosphorylated by CK2.

The protein resides in the cytoplasm. It participates in protein modification; protein ubiquitination. Substrate recognition component of a SCF (SKP1-CUL1-F-box protein) E3 ubiquitin-protein ligase complex which mediates the ubiquitination and subsequent proteasomal degradation of target proteins and plays a role in several biological processes such as cell cycle, cell proliferation, or maintenance of chromosome stability. Ubiquitinates mTORC1-bound TTI1 and TELO2 when they are phosphorylated by CK2 following growth factor deprivation, leading to their degradation. In contrast, does not mediate ubiquitination of TTI1 and TELO2 when they are part of the mTORC2 complex. As a consequence, mTORC1 is inactivated to restrain cell growth and protein translation, while mTORC2 is the activated due to the relief of feedback inhibition by mTORC1. Plays a role in maintaining epithelial cell survival by regulating the turn-over of chromatin modulator PRMT4 through ubiquitination and degradation by the proteasomal pathway. Also regulates PPARgamma stability by facilitating PPARgamma/PPARG ubiquitination and thereby plays a role in adipocyte differentiation. The chain is F-box only protein 9 (FBXO9) from Bos taurus (Bovine).